Here is a 196-residue protein sequence, read N- to C-terminus: Neurensin-1 (196 aa).

The next 2 helical transmembrane spans lie at 67 to 87 (LISGTVFVILGLTVLAVGFLV) and 121 to 141 (AVLFCIGGTSMAGCLLMSVFA).

This sequence belongs to the VMP family. Expressed predominantly in brain. Also weakly expressed in lung and spleen. In brain, expressed strongly in nerve fibers of the cerebral cortex, anterior cerebral nuclei, hypothalamus, amygdaloid complex, brain stem of the metaencephalon and medulla oblongata, and moderately expressed in soma of neurons of the dentate gyrus of the hippocampus and Purkinje cells of the cerebellum.

Its subcellular location is the membrane. The protein localises to the cell projection. It localises to the neuron projection. In terms of biological role, may play an important role in neural organelle transport, and in transduction of nerve signals or in nerve growth. May play a role in neurite extension. The protein is Neurensin-1 of Mus musculus (Mouse).